Reading from the N-terminus, the 338-residue chain is Ketol-acid reductoisomerase (NADP(+)) (338 aa).

One can recognise a KARI N-terminal Rossmann domain in the interval 1–181 (MKVYYDKDAD…GGTRGGVIET (181 aa)). Residues 24–27 (YGSQ), arginine 47, and serine 52 contribute to the NADP(+) site. Histidine 107 is a catalytic residue. Glycine 133 lines the NADP(+) pocket. The KARI C-terminal knotted domain maps to 182 to 327 (TFKEETETDL…SRLRDMMPWI (146 aa)). Mg(2+) is bound by residues aspartate 190, glutamate 194, glutamate 226, and glutamate 230. Serine 251 serves as a coordination point for substrate.

This sequence belongs to the ketol-acid reductoisomerase family. Mg(2+) serves as cofactor.

The catalysed reaction is (2R)-2,3-dihydroxy-3-methylbutanoate + NADP(+) = (2S)-2-acetolactate + NADPH + H(+). The enzyme catalyses (2R,3R)-2,3-dihydroxy-3-methylpentanoate + NADP(+) = (S)-2-ethyl-2-hydroxy-3-oxobutanoate + NADPH + H(+). It participates in amino-acid biosynthesis; L-isoleucine biosynthesis; L-isoleucine from 2-oxobutanoate: step 2/4. The protein operates within amino-acid biosynthesis; L-valine biosynthesis; L-valine from pyruvate: step 2/4. Involved in the biosynthesis of branched-chain amino acids (BCAA). Catalyzes an alkyl-migration followed by a ketol-acid reduction of (S)-2-acetolactate (S2AL) to yield (R)-2,3-dihydroxy-isovalerate. In the isomerase reaction, S2AL is rearranged via a Mg-dependent methyl migration to produce 3-hydroxy-3-methyl-2-ketobutyrate (HMKB). In the reductase reaction, this 2-ketoacid undergoes a metal-dependent reduction by NADPH to yield (R)-2,3-dihydroxy-isovalerate. This chain is Ketol-acid reductoisomerase (NADP(+)), found in Nitrosomonas eutropha (strain DSM 101675 / C91 / Nm57).